The sequence spans 410 residues: Cytochrome P450 CYP107DY1 (410 aa).

Residues H106 and R110 each coordinate heme. Residues T249 and E253 each coordinate substrate. Residues R302, H358, and C360 each coordinate heme.

This sequence belongs to the cytochrome P450 family. Heme serves as cofactor.

It catalyses the reaction mevastatin + 2 reduced [2Fe-2S]-[ferredoxin] + O2 + 2 H(+) = pravastatin lactone + 2 oxidized [2Fe-2S]-[ferredoxin] + H2O. Its function is as follows. Cytochrome P450 whose physiological substrate is unknown. In vitro, is able to catalyze the selective hydroxylation of mevastatin to pravastatin, the widely used therapeutic agent for hypercholesterolemia. The protein is Cytochrome P450 CYP107DY1 of Priestia megaterium (strain ATCC 12872 / QMB1551) (Bacillus megaterium).